The sequence spans 659 residues: Threonine--tRNA ligase (659 aa).

The 61-residue stretch at 1–61 folds into the TGS domain; sequence MIDLIFPDGS…TPDLLGGGNR (61 aa). A catalytic region spans residues 249–541; the sequence is DHRKLGKTMD…LLENYAGHLP (293 aa). Zn(2+) contacts are provided by Cys341, His392, and His518. The disordered stretch occupies residues 637–659; sequence EEATPPDLARDRAVAAPAELAQA.

It belongs to the class-II aminoacyl-tRNA synthetase family. In terms of assembly, homodimer. Zn(2+) is required as a cofactor.

It is found in the cytoplasm. The enzyme catalyses tRNA(Thr) + L-threonine + ATP = L-threonyl-tRNA(Thr) + AMP + diphosphate + H(+). Its function is as follows. Catalyzes the attachment of threonine to tRNA(Thr) in a two-step reaction: L-threonine is first activated by ATP to form Thr-AMP and then transferred to the acceptor end of tRNA(Thr). Also edits incorrectly charged L-seryl-tRNA(Thr). The chain is Threonine--tRNA ligase from Caulobacter sp. (strain K31).